The following is a 1420-amino-acid chain: Apolipoprotein(a) (1420 aa).

Residues threonine 19–proline 30 are compositionally biased toward low complexity. The tract at residues threonine 19–glycine 46 is disordered. 5 Kringle domains span residues glutamate 49–cysteine 127, glutamate 163–cysteine 241, glutamate 277–cysteine 355, glutamate 391–cysteine 469, and glutamate 505–cysteine 583. 15 disulfides stabilise this stretch: cysteine 50-cysteine 127, cysteine 71-cysteine 110, cysteine 99-cysteine 122, cysteine 164-cysteine 241, cysteine 185-cysteine 224, cysteine 213-cysteine 236, cysteine 278-cysteine 355, cysteine 299-cysteine 338, cysteine 327-cysteine 350, cysteine 392-cysteine 469, cysteine 413-cysteine 452, cysteine 441-cysteine 464, cysteine 506-cysteine 583, cysteine 527-cysteine 566, and cysteine 555-cysteine 578. The segment at proline 598–valine 617 is disordered. Residues proline 600–glutamate 616 are compositionally biased toward polar residues. 5 Kringle domains span residues aspartate 619–cysteine 697, aspartate 725–cysteine 803, aspartate 839–cysteine 917, aspartate 953–cysteine 1031, and glutamine 1067–cysteine 1145. Intrachain disulfides connect cysteine 620-cysteine 697, cysteine 641-cysteine 680, cysteine 669-cysteine 692, cysteine 726-cysteine 803, cysteine 747-cysteine 786, cysteine 775-cysteine 798, cysteine 840-cysteine 917, cysteine 861-cysteine 900, cysteine 889-cysteine 912, cysteine 954-cysteine 1031, cysteine 975-cysteine 1014, cysteine 1003-cysteine 1026, cysteine 1068-cysteine 1145, cysteine 1089-cysteine 1128, cysteine 1117-cysteine 1140, cysteine 1217-cysteine 1233, cysteine 1309-cysteine 1376, cysteine 1339-cysteine 1355, and cysteine 1366-cysteine 1394. Residues isoleucine 1191–arginine 1418 enclose the Peptidase S1 domain.

Belongs to the peptidase S1 family. Plasminogen subfamily. In terms of assembly, disulfide-linked to apo-B100. Binds to fibronectin and decorin. In terms of processing, N- and O-glycosylated.

Its function is as follows. Apo(a) is the main constituent of lipoprotein(a) (Lp(a)). It has serine proteinase activity and is able of autoproteolysis. Inhibits tissue-type plasminogen activator 1. Lp(a) may be a ligand for megalin/Gp 330. This Macaca mulatta (Rhesus macaque) protein is Apolipoprotein(a) (LPA).